The primary structure comprises 219 residues: Casparian strip membrane protein 3 (219 aa).

Residues methionine 1–serine 43 form a disordered region. Residues methionine 1–glycine 57 lie on the Cytoplasmic side of the membrane. Residues isoleucine 58–isoleucine 78 form a helical membrane-spanning segment. The Extracellular segment spans residues leucine 79 to leucine 108. Residues phenylalanine 109–valine 129 traverse the membrane as a helical segment. Over cysteine 130 to aspartate 147 the chain is Cytoplasmic. Residues leucine 148 to alanine 168 traverse the membrane as a helical segment. Residues histidine 169–glutamate 193 are Extracellular-facing. A glycan (N-linked (GlcNAc...) asparagine) is linked at asparagine 170. Residues alanine 194–leucine 214 traverse the membrane as a helical segment. The Cytoplasmic segment spans residues alanine 215–threonine 219.

The protein belongs to the Casparian strip membrane proteins (CASP) family. Homodimer and heterodimers.

It localises to the cell membrane. Functionally, regulates membrane-cell wall junctions and localized cell wall deposition. Required for establishment of the Casparian strip membrane domain (CSD) and the subsequent formation of Casparian strips, a cell wall modification of the root endodermis that determines an apoplastic barrier between the intraorganismal apoplasm and the extraorganismal apoplasm and prevents lateral diffusion. This Lotus japonicus (Lotus corniculatus var. japonicus) protein is Casparian strip membrane protein 3.